We begin with the raw amino-acid sequence, 200 residues long: Adenylate kinase (200 aa).

10 to 15 (GAGKGT) lines the ATP pocket. Positions 30-59 (STGDMLRAAVAAGTPVGLEAKAVMESGGLV) are NMP. Residues T31, R36, 57–59 (GLV), 85–88 (GFPR), and Q92 contribute to the AMP site. Positions 126-142 (KRAAETLARGQAVRKDD) are LID. R127 contributes to the ATP binding site. Residues R139 and R150 each coordinate AMP. Position 178 (Q178) interacts with ATP.

The protein belongs to the adenylate kinase family. In terms of assembly, monomer.

The protein localises to the cytoplasm. The enzyme catalyses AMP + ATP = 2 ADP. It participates in purine metabolism; AMP biosynthesis via salvage pathway; AMP from ADP: step 1/1. In terms of biological role, catalyzes the reversible transfer of the terminal phosphate group between ATP and AMP. Plays an important role in cellular energy homeostasis and in adenine nucleotide metabolism. This chain is Adenylate kinase, found in Methylobacterium radiotolerans (strain ATCC 27329 / DSM 1819 / JCM 2831 / NBRC 15690 / NCIMB 10815 / 0-1).